Reading from the N-terminus, the 318-residue chain is Isoeugenol synthase 1 (318 aa).

NADP(+)-binding positions include 10 to 13 (TGYI), 32 to 43 (ARPLTPDSTPSS), Arg33, 84 to 86 (VPM), 109 to 111 (SEF), Lys131, and 151 to 153 (NCF). The active-site Proton donor/acceptor is the Lys131. Pro260 is a substrate binding site.

It belongs to the NmrA-type oxidoreductase family. As to expression, mostly expressed in petals, and, to a lower extent, in sepals, stamens and pistils.

It carries out the reaction (E)-isoeugenol + acetate + NADP(+) = (E)-coniferyl acetate + NADPH. It functions in the pathway aromatic compound metabolism; phenylpropanoid biosynthesis. Functionally, catalyzes the synthesis of the phenylpropene isoeugenol from coniferyl acetate. Phenylpropenes are the primary constituents of various essential plant oils. They are produced as antimicrobial and antianimal compounds, or as floral attractants of pollinators. Isoeugenol is a characteristic aromatic constituent of spices and a floral volatile compound. This chain is Isoeugenol synthase 1, found in Clarkia breweri (Fairy fans).